Here is a 146-residue protein sequence, read N- to C-terminus: Hemoglobin subunit beta-1 (146 aa).

In terms of domain architecture, Globin spans 2–146 (VWTNEERSII…VVSALGKQYH (145 aa)). Heme b contacts are provided by histidine 63 and histidine 92.

It belongs to the globin family. As to quaternary structure, hb1 is a heterotetramer of two alpha chains and two beta-1 chains. In terms of tissue distribution, red blood cells.

Functionally, involved in oxygen transport from gills to the various peripheral tissues. In Pseudaphritis urvillii (Congolli), this protein is Hemoglobin subunit beta-1 (hbb1).